The primary structure comprises 486 residues: Inosine-5'-monophosphate dehydrogenase (486 aa).

CBS domains lie at 99 to 154 and 156 to 215; these read IVED…LVKE and MTKE…VRDE. NAD(+)-binding positions include Asp-247 and 294–296; that span reads GIG. Positions 296 and 298 each coordinate K(+). Ser-299 is an IMP binding site. Residue Cys-301 coordinates K(+). Cys-301 serves as the catalytic Thioimidate intermediate. IMP is bound by residues 334–336, 357–358, and 381–385; these read DGG, GN, and YRGMG. The active-site Proton acceptor is Arg-397. Residue Glu-412 participates in IMP binding. Glu-466, Ser-467, and His-468 together coordinate K(+).

The protein belongs to the IMPDH/GMPR family. In terms of assembly, homotetramer. K(+) serves as cofactor.

The catalysed reaction is IMP + NAD(+) + H2O = XMP + NADH + H(+). It functions in the pathway purine metabolism; XMP biosynthesis via de novo pathway; XMP from IMP: step 1/1. Its activity is regulated as follows. Mycophenolic acid (MPA) is a non-competitive inhibitor that prevents formation of the closed enzyme conformation by binding to the same site as the amobile flap. In contrast, mizoribine monophosphate (MZP) is a competitive inhibitor that induces the closed conformation. MPA is a potent inhibitor of mammalian IMPDHs but a poor inhibitor of the bacterial enzymes. MZP is a more potent inhibitor of bacterial IMPDH. Its function is as follows. Catalyzes the conversion of inosine 5'-phosphate (IMP) to xanthosine 5'-phosphate (XMP), the first committed and rate-limiting step in the de novo synthesis of guanine nucleotides, and therefore plays an important role in the regulation of cell growth. The sequence is that of Inosine-5'-monophosphate dehydrogenase from Pyrococcus horikoshii (strain ATCC 700860 / DSM 12428 / JCM 9974 / NBRC 100139 / OT-3).